The primary structure comprises 25 residues: Fructokinase-1 (25 aa).

This sequence belongs to the ROK (NagC/XylR) family. As to quaternary structure, homodimer. The cofactor is Mg(2+).

It catalyses the reaction D-fructose + ATP = D-fructose 6-phosphate + ADP + H(+). With respect to regulation, inhibition by zinc ions (Potential). Inactivated by EDTA. The sequence is that of Fructokinase-1 from Lactococcus lactis subsp. lactis (Streptococcus lactis).